The primary structure comprises 651 residues: Altered inheritance of mitochondria protein 21 (651 aa).

Residues 1–85 form a disordered region; it reads MPSEVTPKVP…LQRPVRRSTT (85 aa). Residues 9 to 19 are compositionally biased toward basic and acidic residues; sequence VPERPSRRKTS. Threonine 18 carries the phosphothreonine modification. Position 36 is a phosphoserine (serine 36). Residue threonine 58 is modified to Phosphothreonine. Residue serine 70 is modified to Phosphoserine. Threonine 85 bears the Phosphothreonine mark. A Phosphoserine modification is found at serine 104. A compositionally biased stretch (basic residues) spans 110–119; that stretch reads NIHNVSRKKS. 2 disordered regions span residues 110–522 and 549–651; these read NIHN…EKIE and IDTT…FHSL. Polar residues-rich tracts occupy residues 133–149 and 164–178; these read QNGQ…TNPS and SAIS…SNNE. Over residues 179–213 the composition is skewed to basic and acidic residues; that stretch reads VTEHSDSEDLTEKQKVHAALDNEAGDRSHFEEKLI. A phosphoserine mark is found at serine 183, serine 206, and serine 231. The span at 243–272 shows a compositional bias: basic and acidic residues; sequence SDDKAEKFTKHPESSLEELQKHQEQQEEKI. At threonine 277 the chain carries Phosphothreonine. Phosphoserine is present on serine 284. A compositionally biased stretch (polar residues) spans 296–323; it reads EVNSQPQGPSDTETVIAATSSNVPSQIA. Position 324 is a phosphoserine (serine 324). 2 stretches are compositionally biased toward basic and acidic residues: residues 339–361 and 372–383; these read KKDF…RVSE and EESKIPKIPSER. The tract at residues 383–396 is interaction with SH3 domain of ABP1; that stretch reads RPKRRAPPPVPKKP. Polar residues-rich tracts occupy residues 414–427 and 437–452; these read DLHN…TTAS and SSIT…TSKL. The span at 471–482 shows a compositional bias: basic and acidic residues; it reads LEKKLSSPDTES. The segment covering 501 to 512 has biased composition (basic residues); the sequence is RRGRGPRGRKLP. Threonine 552 carries the post-translational modification Phosphothreonine. The span at 556 to 567 shows a compositional bias: basic and acidic residues; the sequence is QAERALDEKEKL. A compositionally biased stretch (polar residues) spans 575-586; sequence PLSQLPQTNTVG. 8 positions are modified to phosphoserine: serine 592, serine 595, serine 597, serine 599, serine 639, serine 643, serine 647, and serine 650. Positions 594–605 are enriched in polar residues; sequence ESLSPSEAITNR. Residues 639 to 651 show a composition bias toward basic and acidic residues; that stretch reads SALHSEEASFHSL.

It belongs to the AIM21 family. Interacts with ribosomes. Interacts with ABP1.

It localises to the cytoplasm. The protein resides in the cytoskeleton. Its subcellular location is the actin patch. Its function is as follows. Involved in mitochondrial migration along actin filaments. This chain is Altered inheritance of mitochondria protein 21 (AIM21), found in Saccharomyces cerevisiae (strain RM11-1a) (Baker's yeast).